The sequence spans 956 residues: DNA replication helicase (956 aa).

An ATP-binding site is contributed by Gly120–Thr127. The segment at Pro658 to Ser694 is disordered. Residues Ser667–Gln678 are compositionally biased toward low complexity. The span at Arg679 to Ser694 shows a compositional bias: basic and acidic residues.

Belongs to the herpesviridae helicase family. In terms of assembly, associates with the primase and the primase-associated factor to form the helicase-primase complex.

It localises to the host nucleus. In terms of biological role, component of the helicase/primase complex. Unwinds the DNA at the replication forks and generates single-stranded DNA for both leading and lagging strand synthesis. The primase synthesizes short RNA primers on the lagging strand that the polymerase elongates using dNTPs. Possesses helicase-like motifs and therefore may act as the helicase subunit of the complex. The protein is DNA replication helicase of Human cytomegalovirus (strain AD169) (HHV-5).